Reading from the N-terminus, the 440-residue chain is Ribosomal protein uS12 methylthiotransferase RimO (440 aa).

In terms of domain architecture, MTTase N-terminal spans 5–115; that stretch reads PTVGFVSLGC…VVNAVHEVVP (111 aa). Cys-14, Cys-50, Cys-79, Cys-148, Cys-152, and Cys-155 together coordinate [4Fe-4S] cluster. Residues 134–372 enclose the Radical SAM core domain; sequence LTPRHYAYLK…MAHQQAISAA (239 aa). One can recognise a TRAM domain in the interval 375–440; it reads QLKVGKELDV…DEYDLWAEVI (66 aa).

It belongs to the methylthiotransferase family. RimO subfamily. It depends on [4Fe-4S] cluster as a cofactor.

It localises to the cytoplasm. It carries out the reaction L-aspartate(89)-[ribosomal protein uS12]-hydrogen + (sulfur carrier)-SH + AH2 + 2 S-adenosyl-L-methionine = 3-methylsulfanyl-L-aspartate(89)-[ribosomal protein uS12]-hydrogen + (sulfur carrier)-H + 5'-deoxyadenosine + L-methionine + A + S-adenosyl-L-homocysteine + 2 H(+). Catalyzes the methylthiolation of an aspartic acid residue of ribosomal protein uS12. The protein is Ribosomal protein uS12 methylthiotransferase RimO of Stutzerimonas stutzeri (strain A1501) (Pseudomonas stutzeri).